The chain runs to 507 residues: Maturase K (507 aa).

This sequence belongs to the intron maturase 2 family. MatK subfamily.

It is found in the plastid. It localises to the chloroplast. In terms of biological role, usually encoded in the trnK tRNA gene intron. Probably assists in splicing its own and other chloroplast group II introns. The chain is Maturase K from Annona muricata (Soursop).